We begin with the raw amino-acid sequence, 708 residues long: Quinohemoprotein alcohol dehydrogenase (708 aa).

A signal peptide spans 1–31 (MERLIDNSHGWPGRMVWLLAACLGSAAAFAQ). Pyrroloquinoline quinone is bound at residue Glu101. Cys147 and Cys148 form a disulfide bridge. Pyrroloquinoline quinone is bound by residues Arg153, Thr198, and 214 to 215 (GA). Residue Glu216 participates in Ca(2+) binding. Thr274 contributes to the pyrroloquinoline quinone binding site. Ca(2+) is bound by residues Asn294 and Asp339. Asp339 (proton acceptor) is an active-site residue. Residues Lys366, 425 to 426 (NW), and Val575 contribute to the pyrroloquinoline quinone site. Residues 619-708 (YDPAKVEAGT…GTADAIRPKP (90 aa)) enclose the Cytochrome c domain. Residues Cys635, Cys638, His639, and Met678 each coordinate heme c.

This sequence belongs to the bacterial PQQ dehydrogenase family. In terms of assembly, monomer. The cofactor is pyrroloquinoline quinone. Ca(2+) serves as cofactor. Heme c is required as a cofactor. In the crystallographic structures Trp-543 is oxidized to 2'-hydroxytryptophan.

It is found in the periplasm. It catalyses the reaction 2 oxidized [azurin] + a primary alcohol = 2 reduced [azurin] + an aldehyde + 2 H(+). Catalyzes the dye-linked oxidation of primary alcohols to the corresponding aldehydes and the (subsequent) oxidation of the aldehydes to carboxylic acids. Methanol is not a substrate. This Comamonas testosteroni (Pseudomonas testosteroni) protein is Quinohemoprotein alcohol dehydrogenase.